The sequence spans 848 residues: ATP-dependent RNA helicase dbp10 (848 aa).

Residues Asp22–Asp43 are disordered. Residues Ser69–Arg97 carry the Q motif motif. In terms of domain architecture, Helicase ATP-binding spans Ile100–Val272. Ala113 to Thr120 contacts ATP. The DEAD box signature appears at Asp220–Asp223. The 151-residue stretch at Arg330 to Ser480 folds into the Helicase C-terminal domain. Positions Asn610–Lys650 are disordered. Basic and acidic residues predominate over residues Ile617–Thr627. Over residues Asp628–Ala637 the composition is skewed to polar residues. 3 positions are modified to phosphoserine: Ser638, Ser733, and Ser736. The disordered stretch occupies residues Ala768 to Gly813. The span at Pro789–Ile812 shows a compositional bias: basic and acidic residues.

The protein belongs to the DEAD box helicase family. DDX54/DBP10 subfamily.

It localises to the nucleus. It is found in the nucleolus. It carries out the reaction ATP + H2O = ADP + phosphate + H(+). ATP-binding RNA helicase involved in the biogenesis of 60S ribosomal subunits and is required for the normal formation of 25S and 5.8S rRNAs. The sequence is that of ATP-dependent RNA helicase dbp10 (dbp10) from Schizosaccharomyces pombe (strain 972 / ATCC 24843) (Fission yeast).